A 697-amino-acid chain; its full sequence is Elongation factor G (697 aa).

One can recognise a tr-type G domain in the interval 8–283; that stretch reads EHIRNIGICA…AVVDFLPSPT (276 aa). GTP contacts are provided by residues 17-24, 81-85, and 135-138; these read AHIDAGKT, DTPGH, and NKMD.

It belongs to the TRAFAC class translation factor GTPase superfamily. Classic translation factor GTPase family. EF-G/EF-2 subfamily.

The protein localises to the cytoplasm. Functionally, catalyzes the GTP-dependent ribosomal translocation step during translation elongation. During this step, the ribosome changes from the pre-translocational (PRE) to the post-translocational (POST) state as the newly formed A-site-bound peptidyl-tRNA and P-site-bound deacylated tRNA move to the P and E sites, respectively. Catalyzes the coordinated movement of the two tRNA molecules, the mRNA and conformational changes in the ribosome. The chain is Elongation factor G from Rickettsia rhipicephali.